A 490-amino-acid chain; its full sequence is MTERVDPKKLIKGGLHDWEVVIGMEIHAQVTSRSKLFSGASTEFGGEPNDHVSLVDAAMPGMLPVINEECVAQAVRTGLGLKAQINLRSVFDRKNYFYPDLPQGYQISQYKDPIVGEGEVLVDLPEGESMTVGIERLHLEQDAGKSLHDQDPTKSFVDLNRSGVALMEIVSRPDLRSSEEARAYVTKLRTILRYLGTCDGDMEKGSLRADVNVSVRRPGEPLGTRCEIKNVNSIRFIGQAIETEARRQIAILEDGGKIDQETRLYDPGKGETRSMRSKEEAHDYRYFPDPDLLPLEFDQAYVDALASGLPELPDAKKARFIKDFGLSAYDAGVLVAERASADYFEAVARGRDGKAAANWVINELFGRLNKEGRSIEDTPVSAEQLGTIVDLIGDGVISGKIAKDLFEIVWSEGGDPRAIVEARGMKQVTDTGAIEAAVDAIIAANPDKVEQAKAKPTLLGWFVGQTMKATGGKANPAAVNALLKDKLGIE.

Belongs to the GatB/GatE family. GatB subfamily. In terms of assembly, heterotrimer of A, B and C subunits.

It catalyses the reaction L-glutamyl-tRNA(Gln) + L-glutamine + ATP + H2O = L-glutaminyl-tRNA(Gln) + L-glutamate + ADP + phosphate + H(+). It carries out the reaction L-aspartyl-tRNA(Asn) + L-glutamine + ATP + H2O = L-asparaginyl-tRNA(Asn) + L-glutamate + ADP + phosphate + 2 H(+). Functionally, allows the formation of correctly charged Asn-tRNA(Asn) or Gln-tRNA(Gln) through the transamidation of misacylated Asp-tRNA(Asn) or Glu-tRNA(Gln) in organisms which lack either or both of asparaginyl-tRNA or glutaminyl-tRNA synthetases. The reaction takes place in the presence of glutamine and ATP through an activated phospho-Asp-tRNA(Asn) or phospho-Glu-tRNA(Gln). This Methylorubrum extorquens (strain PA1) (Methylobacterium extorquens) protein is Aspartyl/glutamyl-tRNA(Asn/Gln) amidotransferase subunit B.